Here is a 458-residue protein sequence, read N- to C-terminus: Cytoplasmic tRNA 2-thiolation protein 2 (458 aa).

Belongs to the CTU2/NCS2 family.

The protein resides in the cytoplasm. It participates in tRNA modification; 5-methoxycarbonylmethyl-2-thiouridine-tRNA biosynthesis. Its function is as follows. Plays a central role in 2-thiolation of mcm(5)S(2)U at tRNA wobble positions of tRNA(Lys), tRNA(Glu) and tRNA(Gln). May act by forming a heterodimer with NCS6/CTU1 that ligates sulfur from thiocarboxylated URM1 onto the uridine of tRNAs at wobble position. The polypeptide is Cytoplasmic tRNA 2-thiolation protein 2 (Arabidopsis thaliana (Mouse-ear cress)).